The chain runs to 219 residues: MSESAFKDCFLTDVSADTRLFHFLARDYIVQEGQQPSWLFYLTRGRARLYATLANGRVSLIDFFAAPCFIGEIELIDKDHEPRAVQAIEECWCLALPMKHYRPLLLNDTLFLRKLCVTLSHKNYRNIVSLTQNQSFPLVNRLAAFILLSQEGDLYHEKHTQAAEYLGVSYRHLLYVLAQFIHDGLLIKSKKGYLIKNRKQLSGLALEMDPENKFSGMMQ.

The segment at 19–97 (RLFHFLARDY…IEECWCLALP (79 aa)) is sensory domain. Positions 68, 91, 93, and 116 each coordinate [4Fe-4S] cluster. The dimer interface stretch occupies residues 111-131 (FLRKLCVTLSHKNYRNIVSLT). The region spanning 136–199 (FPLVNRLAAF…KKGYLIKNRK (64 aa)) is the HTH crp-type domain. A DNA-binding region (H-T-H motif) is located at residues 158–181 (KHTQAAEYLGVSYRHLLYVLAQFI).

As to quaternary structure, homodimer. The cofactor is [4Fe-4S] cluster.

Its subcellular location is the cytoplasm. Transcription regulator involved in mid-term, stationary-phase viability under nitrogen starvation. Might control expression of the salvage pathways or in some other way repress the recycling of nucleobases to nucleic acids and enhance their use as general nitrogen sources during nitrogen-limited growth. The chain is Regulatory protein YeiL (yeiL) from Escherichia coli O157:H7.